The chain runs to 503 residues: ATP synthase subunit alpha (503 aa).

Residue 169-176 (GDRQTGKT) participates in ATP binding.

It belongs to the ATPase alpha/beta chains family. As to quaternary structure, F-type ATPases have 2 components, CF(1) - the catalytic core - and CF(0) - the membrane proton channel. CF(1) has five subunits: alpha(3), beta(3), gamma(1), delta(1), epsilon(1). CF(0) has three main subunits: a(1), b(2) and c(9-12). The alpha and beta chains form an alternating ring which encloses part of the gamma chain. CF(1) is attached to CF(0) by a central stalk formed by the gamma and epsilon chains, while a peripheral stalk is formed by the delta and b chains.

It is found in the cell membrane. The enzyme catalyses ATP + H2O + 4 H(+)(in) = ADP + phosphate + 5 H(+)(out). Produces ATP from ADP in the presence of a proton gradient across the membrane. The alpha chain is a regulatory subunit. The protein is ATP synthase subunit alpha of Staphylococcus epidermidis (strain ATCC 35984 / DSM 28319 / BCRC 17069 / CCUG 31568 / BM 3577 / RP62A).